The chain runs to 249 residues: Chromosome segregation and cytokinesis defective protein 1 (249 aa).

A coiled-coil region spans residues 12 to 48 (VVAMADTLETRVKDLLEEYKKKLREVALQTAKAESDR). Disordered regions lie at residues 70–89 (PDDF…AAVA), 94–183 (LPSE…PEKP), and 208–249 (TTAT…GTSV). The span at 73-85 (FYIESGEEEEEGE) shows a compositional bias: acidic residues. Residues 109 to 126 (QKTSIPIGQNSGRNTVQV) are compositionally biased toward polar residues. The span at 224-236 (SGAASKKAAAAAG) shows a compositional bias: low complexity.

Belongs to the borealin family. Highly divergent. In terms of assembly, component of the CPC complex which consists of icp-1; csc-1; bir-1 and air-2. Within the complex interacts with Aurora B/air-2, bir-1 and icp-1.

It localises to the nucleus. It is found in the chromosome. The protein localises to the centromere. The protein resides in the cytoplasm. Its subcellular location is the cytoskeleton. It localises to the spindle. In terms of biological role, component of the chromosomal passenger complex (CPC), a complex that acts as a key regulator of chromosome segregation and cytokinesis during mitosis. The CPC complex has essential functions at the centromere in ensuring correct chromosome alignment and segregation. In the complex, it may be required to direct the Aurora B/air-2 to centromeric DNA. In Caenorhabditis elegans, this protein is Chromosome segregation and cytokinesis defective protein 1 (csc-1).